A 395-amino-acid polypeptide reads, in one-letter code: Putative ankyrin repeat protein RF_0950 (395 aa).

7 ANK repeats span residues Tyr-3–Thr-32, Tyr-36–Ala-65, Ile-69–Val-98, Arg-101–Gln-130, Asn-134–Leu-166, Asn-172–Ile-201, and Ala-205–Glu-234. The 124-residue stretch at Lys-272–Lys-395 folds into the Glutamine amidotransferase type-1 domain. Cys-377 functions as the Nucleophile in the catalytic mechanism.

This Rickettsia felis (strain ATCC VR-1525 / URRWXCal2) (Rickettsia azadi) protein is Putative ankyrin repeat protein RF_0950.